A 285-amino-acid polypeptide reads, in one-letter code: Putative cuticle collagen 75 (285 aa).

2 triple-helical region regions span residues 87 to 116 (GRIG…PGEL) and 133 to 261 (GPKG…PGLD). Residues 207–231 (PGAPGIPGEEGLSGPTGQPGSPGSI) show a composition bias toward low complexity. Positions 207–257 (PGAPGIPGEEGLSGPTGQPGSPGSIGAMGYEGAYGDRGEPGPPGPIGRRGG) are disordered.

It belongs to the cuticular collagen family. In terms of assembly, collagen polypeptide chains are complexed within the cuticle by disulfide bonds and other types of covalent cross-links.

Nematode cuticles are composed largely of collagen-like proteins. The cuticle functions both as an exoskeleton and as a barrier to protect the worm from its environment. This Caenorhabditis elegans protein is Putative cuticle collagen 75 (col-75).